The primary structure comprises 72 residues: Translation initiation factor IF-1 (72 aa).

Residues 1–72 (MAKEDSIRMQ…NKGRIVYRER (72 aa)) form the S1-like domain.

The protein belongs to the IF-1 family. Component of the 30S ribosomal translation pre-initiation complex which assembles on the 30S ribosome in the order IF-2 and IF-3, IF-1 and N-formylmethionyl-tRNA(fMet); mRNA recruitment can occur at any time during PIC assembly.

It is found in the cytoplasm. Its function is as follows. One of the essential components for the initiation of protein synthesis. Stabilizes the binding of IF-2 and IF-3 on the 30S subunit to which N-formylmethionyl-tRNA(fMet) subsequently binds. Helps modulate mRNA selection, yielding the 30S pre-initiation complex (PIC). Upon addition of the 50S ribosomal subunit IF-1, IF-2 and IF-3 are released leaving the mature 70S translation initiation complex. This chain is Translation initiation factor IF-1, found in Halorhodospira halophila (strain DSM 244 / SL1) (Ectothiorhodospira halophila (strain DSM 244 / SL1)).